We begin with the raw amino-acid sequence, 724 residues long: uncharacterized protein (724 aa).

This is an uncharacterized protein from Treponema pallidum (strain Nichols).